A 551-amino-acid chain; its full sequence is Arginine--tRNA ligase (551 aa).

The short motif at 123-133 (ANPTGPLTIGR) is the 'HIGH' region element.

Belongs to the class-I aminoacyl-tRNA synthetase family. As to quaternary structure, monomer.

The protein resides in the cytoplasm. The enzyme catalyses tRNA(Arg) + L-arginine + ATP = L-arginyl-tRNA(Arg) + AMP + diphosphate. The sequence is that of Arginine--tRNA ligase from Chlorobium phaeobacteroides (strain DSM 266 / SMG 266 / 2430).